We begin with the raw amino-acid sequence, 157 residues long: SsrA-binding protein (157 aa).

Residues 132–157 are disordered; that stretch reads VHDKRQAQKDKDWAREKDRLFKKAYK. Over residues 135–157 the composition is skewed to basic and acidic residues; it reads KRQAQKDKDWAREKDRLFKKAYK.

Belongs to the SmpB family.

It localises to the cytoplasm. Required for rescue of stalled ribosomes mediated by trans-translation. Binds to transfer-messenger RNA (tmRNA), required for stable association of tmRNA with ribosomes. tmRNA and SmpB together mimic tRNA shape, replacing the anticodon stem-loop with SmpB. tmRNA is encoded by the ssrA gene; the 2 termini fold to resemble tRNA(Ala) and it encodes a 'tag peptide', a short internal open reading frame. During trans-translation Ala-aminoacylated tmRNA acts like a tRNA, entering the A-site of stalled ribosomes, displacing the stalled mRNA. The ribosome then switches to translate the ORF on the tmRNA; the nascent peptide is terminated with the 'tag peptide' encoded by the tmRNA and targeted for degradation. The ribosome is freed to recommence translation, which seems to be the essential function of trans-translation. The polypeptide is SsrA-binding protein (Francisella tularensis subsp. novicida (strain U112)).